We begin with the raw amino-acid sequence, 140 residues long: uncharacterized protein (140 aa).

This is an uncharacterized protein from Bacillus subtilis (strain 168).